We begin with the raw amino-acid sequence, 874 residues long: DNA mismatch repair protein MutS (874 aa).

613-620 (GPNMGGKS) provides a ligand contact to ATP. The disordered stretch occupies residues 799 to 820 (EAGSTPSPAPVSVNEPKPAAPT).

The protein belongs to the DNA mismatch repair MutS family.

Its function is as follows. This protein is involved in the repair of mismatches in DNA. It is possible that it carries out the mismatch recognition step. This protein has a weak ATPase activity. The polypeptide is DNA mismatch repair protein MutS (Marinobacter nauticus (strain ATCC 700491 / DSM 11845 / VT8) (Marinobacter aquaeolei)).